A 325-amino-acid polypeptide reads, in one-letter code: Serine/threonine-protein phosphatase 2A activator 1 (325 aa).

This sequence belongs to the PTPA-type PPIase family.

It localises to the cytoplasm. The protein resides in the nucleus. It carries out the reaction [protein]-peptidylproline (omega=180) = [protein]-peptidylproline (omega=0). Its function is as follows. PPIases accelerate the folding of proteins. It catalyzes the cis-trans isomerization of proline imidic peptide bonds in oligopeptides. Acts as a regulatory subunit for PP2A-like phosphatases modulating their activity or substrate specificity, probably by inducing a conformational change in the catalytic subunit, a direct target of the PPIase. Can reactivate inactive phosphatase PP2A-phosphatase methylesterase complexes (PP2Ai) in presence of ATP and Mg(2+) by dissociating the inactive form from the complex. In Schizosaccharomyces pombe (strain 972 / ATCC 24843) (Fission yeast), this protein is Serine/threonine-protein phosphatase 2A activator 1 (rrd1).